The chain runs to 257 residues: Snake venom serine protease Haly-2 (257 aa).

Positions 1–18 are cleaved as a signal peptide; sequence MVLIRVLANLLILQLSYA. The propeptide occupies 19–24; it reads QKSSEL. The Peptidase S1 domain maps to 25 to 248; it reads IIGGDECNIN…HLEWIRSIIA (224 aa). Intrachain disulfides connect Cys31/Cys162, Cys49/Cys65, Cys97/Cys255, Cys141/Cys209, Cys173/Cys188, and Cys199/Cys224. His64 functions as the Charge relay system in the catalytic mechanism. N-linked (GlcNAc...) asparagine glycosylation occurs at Asn100. The active-site Charge relay system is the Asp109. Ser203 serves as the catalytic Charge relay system.

Belongs to the peptidase S1 family. Snake venom subfamily. In terms of assembly, monomer. As to expression, expressed by the venom gland.

It localises to the secreted. Its function is as follows. Snake venom serine protease that may act in the hemostasis system of the prey. The polypeptide is Snake venom serine protease Haly-2 (Gloydius brevicauda (Korean slamosa snake)).